The primary structure comprises 188 residues: Acireductone dioxygenase (188 aa).

Residues H97, H99, E103, and H141 each coordinate Fe(2+). The Ni(2+) site is built by H97, H99, E103, and H141.

Belongs to the acireductone dioxygenase (ARD) family. As to quaternary structure, monomer. It depends on Fe(2+) as a cofactor. Requires Ni(2+) as cofactor.

The catalysed reaction is 1,2-dihydroxy-5-(methylsulfanyl)pent-1-en-3-one + O2 = 3-(methylsulfanyl)propanoate + CO + formate + 2 H(+). It catalyses the reaction 1,2-dihydroxy-5-(methylsulfanyl)pent-1-en-3-one + O2 = 4-methylsulfanyl-2-oxobutanoate + formate + 2 H(+). It functions in the pathway amino-acid biosynthesis; L-methionine biosynthesis via salvage pathway; L-methionine from S-methyl-5-thio-alpha-D-ribose 1-phosphate: step 5/6. Functionally, catalyzes 2 different reactions between oxygen and the acireductone 1,2-dihydroxy-3-keto-5-methylthiopentene (DHK-MTPene) depending upon the metal bound in the active site. Fe-containing acireductone dioxygenase (Fe-ARD) produces formate and 2-keto-4-methylthiobutyrate (KMTB), the alpha-ketoacid precursor of methionine in the methionine recycle pathway. Ni-containing acireductone dioxygenase (Ni-ARD) produces methylthiopropionate, carbon monoxide and formate, and does not lie on the methionine recycle pathway. The polypeptide is Acireductone dioxygenase (Gluconobacter oxydans (strain 621H) (Gluconobacter suboxydans)).